The primary structure comprises 578 residues: Sulfite reductase [NADPH] hemoprotein beta-component (578 aa).

The [4Fe-4S] cluster site is built by C441, C447, C487, and C491. C491 provides a ligand contact to siroheme.

Belongs to the nitrite and sulfite reductase 4Fe-4S domain family. As to quaternary structure, alpha(8)-beta(8). The alpha component is a flavoprotein, the beta component is a hemoprotein. Siroheme serves as cofactor. [4Fe-4S] cluster is required as a cofactor.

It carries out the reaction hydrogen sulfide + 3 NADP(+) + 3 H2O = sulfite + 3 NADPH + 4 H(+). The protein operates within sulfur metabolism; hydrogen sulfide biosynthesis; hydrogen sulfide from sulfite (NADPH route): step 1/1. Functionally, component of the sulfite reductase complex that catalyzes the 6-electron reduction of sulfite to sulfide. This is one of several activities required for the biosynthesis of L-cysteine from sulfate. The chain is Sulfite reductase [NADPH] hemoprotein beta-component from Vibrio vulnificus (strain CMCP6).